We begin with the raw amino-acid sequence, 300 residues long: MHDFPNIDFTQRFIFDESDVRGELVALERSYAEVLAKHPYPEPVAQLLGELMAAAALLVGTLKFDGLLILQARSSGAVPLLMVECSSERELRGIARYDEALVTAGAGLQDLMPDGSLALTIDPNKGKRYQGIVALDGVDLSESLSNYFVMSEQLGTRFWLKADGHRARGLLLQQLPIAQITDPEERDASWEHVITLANTLTAEEMLGLDNQTILHRLYHEDPVRLFDEQPICFRCSCSRERSANALASLGLEDAQQLVIEHNGTIEIDCQFCNQRYLFDATDVAQLFAGGGVDSPSDTRH.

Cystine bridges form between C235–C237 and C269–C272.

It belongs to the HSP33 family. Post-translationally, under oxidizing conditions two disulfide bonds are formed involving the reactive cysteines. Under reducing conditions zinc is bound to the reactive cysteines and the protein is inactive.

It is found in the cytoplasm. In terms of biological role, redox regulated molecular chaperone. Protects both thermally unfolding and oxidatively damaged proteins from irreversible aggregation. Plays an important role in the bacterial defense system toward oxidative stress. In Pseudomonas syringae pv. syringae (strain B728a), this protein is 33 kDa chaperonin.